The following is a 302-amino-acid chain: HTH-type transcriptional regulator ArgP (302 aa).

The HTH lysR-type domain occupies 4 to 60 (PDYRTLQALDAVIRERGFERAAQKLCITQSAVSQRIKQLENLFGQPLLVRTVPPRPT). Positions 21–40 (FERAAQKLCITQSAVSQRIK) form a DNA-binding region, H-T-H motif.

The protein belongs to the LysR transcriptional regulatory family. In terms of assembly, homodimer.

In terms of biological role, controls the transcription of genes involved in arginine and lysine metabolism. The sequence is that of HTH-type transcriptional regulator ArgP from Yersinia pseudotuberculosis serotype O:1b (strain IP 31758).